The following is a 215-amino-acid chain: MPNLLHTNQSHFFFLHHPPIYTVSSKTQAFHFPQSMAPVNLRTNLSVRRTVRCMANPRRVKMVAKQIMRELSDMLLTDTVLQHAVLPEAALGADRYLSSLTTISDVEVSNDLQVVKVYVSVFGDDRGKDVAIAGLKSKAKYVRSELGKRMKLRLTPEVRFIEDEAMERGSRVIAILDKIKAEKGSGEGKTEPSDSTEDDQDWEVDDPDEDIIYVK.

The N-terminal 52 residues, 1–52, are a transit peptide targeting the chloroplast; it reads MPNLLHTNQSHFFFLHHPPIYTVSSKTQAFHFPQSMAPVNLRTNLSVRRTVR. The segment covering 183–192 has biased composition (basic and acidic residues); it reads KGSGEGKTEP. The segment at 183–210 is disordered; that stretch reads KGSGEGKTEPSDSTEDDQDWEVDDPDED. The segment covering 194–210 has biased composition (acidic residues); that stretch reads DSTEDDQDWEVDDPDED.

This sequence belongs to the RbfA family.

The protein localises to the plastid. The protein resides in the chloroplast. This Arabidopsis thaliana (Mouse-ear cress) protein is Probable ribosome-binding factor A, chloroplastic.